A 235-amino-acid chain; its full sequence is MRSGLIAQKLGMTRVFTDEGEHVPVTVLKLDQVQVVAQRTEDRDGYTALQLGAGKAKVKNVAKAQREQFARAKVEPKKKLVEFRVTPDALIEVGAEITADHFVPGQFVDVTGTTIGRGFTGPMRRWNFGGLRATHGVSVSHRSHGSTGGRQDPGKTFKNKKMAGHYGVEKVTVQNLKVVQVDVERGLILVKGAIPGHEGGWVLIRDAVKKKLPDGAPFPGAIRAPAADTPAAQEG.

Residues 138 to 157 (SVSHRSHGSTGGRQDPGKTF) are disordered. The residue at position 151 (glutamine 151) is an N5-methylglutamine.

The protein belongs to the universal ribosomal protein uL3 family. Part of the 50S ribosomal subunit. Forms a cluster with proteins L14 and L19. Methylated by PrmB.

One of the primary rRNA binding proteins, it binds directly near the 3'-end of the 23S rRNA, where it nucleates assembly of the 50S subunit. This is Large ribosomal subunit protein uL3 from Rhodospirillum centenum (strain ATCC 51521 / SW).